We begin with the raw amino-acid sequence, 556 residues long: DNA ligase (556 aa).

Glutamate 245 serves as a coordination point for ATP. Lysine 247 serves as the catalytic N6-AMP-lysine intermediate. ATP contacts are provided by arginine 252, arginine 267, glutamate 296, phenylalanine 336, arginine 408, and lysine 414.

Belongs to the ATP-dependent DNA ligase family. Requires Mg(2+) as cofactor.

The enzyme catalyses ATP + (deoxyribonucleotide)n-3'-hydroxyl + 5'-phospho-(deoxyribonucleotide)m = (deoxyribonucleotide)n+m + AMP + diphosphate.. DNA ligase that seals nicks in double-stranded DNA during DNA replication, DNA recombination and DNA repair. This chain is DNA ligase, found in Methanosphaerula palustris (strain ATCC BAA-1556 / DSM 19958 / E1-9c).